Here is a 101-residue protein sequence, read N- to C-terminus: Pro-corazonin (101 aa).

The N-terminal stretch at 1-19 is a signal peptide; that stretch reads MVTNITLILTLMTLASVTA. A Pyrrolidone carboxylic acid modification is found at glutamine 20. The residue at position 30 (asparagine 30) is an Asparagine amide.

The protein belongs to the corazonin family.

It localises to the secreted. Cardioactive peptide. Corazonin is probably involved in the physiological regulation of the heart beat. The protein is Pro-corazonin (crz) of Bombyx mori (Silk moth).